Consider the following 263-residue polypeptide: Glutamate 5-kinase (263 aa).

Lys15 serves as a coordination point for ATP. Substrate-binding residues include Ser55, Asp142, and Asn154. ATP contacts are provided by residues Ser174–Asp175 and Thr216–Lys222.

The protein belongs to the glutamate 5-kinase family.

The protein resides in the cytoplasm. The enzyme catalyses L-glutamate + ATP = L-glutamyl 5-phosphate + ADP. It functions in the pathway amino-acid biosynthesis; L-proline biosynthesis; L-glutamate 5-semialdehyde from L-glutamate: step 1/2. Functionally, catalyzes the transfer of a phosphate group to glutamate to form L-glutamate 5-phosphate. The polypeptide is Glutamate 5-kinase (Alkaliphilus oremlandii (strain OhILAs) (Clostridium oremlandii (strain OhILAs))).